A 702-amino-acid chain; its full sequence is Polyribonucleotide nucleotidyltransferase (702 aa).

Mg(2+) contacts are provided by Asp-487 and Asp-493. Residues 554–613 (PKILTMQINPDKIRDVIGPSGKQINKIIEETGVKIDIEQDGTIFISSVNEEMNKKAKKII) form the KH domain. In terms of domain architecture, S1 motif spans 623 to 691 (GQVYLGKVKR…KQGRVNLSRK (69 aa)).

Belongs to the polyribonucleotide nucleotidyltransferase family. Mg(2+) serves as cofactor.

It is found in the cytoplasm. The catalysed reaction is RNA(n+1) + phosphate = RNA(n) + a ribonucleoside 5'-diphosphate. Its function is as follows. Involved in mRNA degradation. Catalyzes the phosphorolysis of single-stranded polyribonucleotides processively in the 3'- to 5'-direction. The chain is Polyribonucleotide nucleotidyltransferase from Anoxybacillus flavithermus (strain DSM 21510 / WK1).